Reading from the N-terminus, the 303-residue chain is UDP-3-O-acyl-N-acetylglucosamine deacetylase (303 aa).

His-78, His-237, and Asp-241 together coordinate Zn(2+). The active-site Proton donor is His-264.

Belongs to the LpxC family. Zn(2+) is required as a cofactor.

The enzyme catalyses a UDP-3-O-[(3R)-3-hydroxyacyl]-N-acetyl-alpha-D-glucosamine + H2O = a UDP-3-O-[(3R)-3-hydroxyacyl]-alpha-D-glucosamine + acetate. It functions in the pathway glycolipid biosynthesis; lipid IV(A) biosynthesis; lipid IV(A) from (3R)-3-hydroxytetradecanoyl-[acyl-carrier-protein] and UDP-N-acetyl-alpha-D-glucosamine: step 2/6. Catalyzes the hydrolysis of UDP-3-O-myristoyl-N-acetylglucosamine to form UDP-3-O-myristoylglucosamine and acetate, the committed step in lipid A biosynthesis. In Pseudomonas fluorescens (strain SBW25), this protein is UDP-3-O-acyl-N-acetylglucosamine deacetylase.